The sequence spans 104 residues: Flagellar hook-basal body complex protein FliE (104 aa).

It belongs to the FliE family.

It is found in the bacterial flagellum basal body. The chain is Flagellar hook-basal body complex protein FliE from Escherichia coli O6:K15:H31 (strain 536 / UPEC).